The following is a 578-amino-acid chain: Proline--tRNA ligase (578 aa).

It belongs to the class-II aminoacyl-tRNA synthetase family. ProS type 1 subfamily. As to quaternary structure, homodimer.

It is found in the cytoplasm. It catalyses the reaction tRNA(Pro) + L-proline + ATP = L-prolyl-tRNA(Pro) + AMP + diphosphate. Its function is as follows. Catalyzes the attachment of proline to tRNA(Pro) in a two-step reaction: proline is first activated by ATP to form Pro-AMP and then transferred to the acceptor end of tRNA(Pro). As ProRS can inadvertently accommodate and process non-cognate amino acids such as alanine and cysteine, to avoid such errors it has two additional distinct editing activities against alanine. One activity is designated as 'pretransfer' editing and involves the tRNA(Pro)-independent hydrolysis of activated Ala-AMP. The other activity is designated 'posttransfer' editing and involves deacylation of mischarged Ala-tRNA(Pro). The misacylated Cys-tRNA(Pro) is not edited by ProRS. The protein is Proline--tRNA ligase of Paraburkholderia xenovorans (strain LB400).